A 755-amino-acid polypeptide reads, in one-letter code: Serine/threonine-protein kinase GL21140 (755 aa).

The segment covering 18 to 52 has biased composition (low complexity); the sequence is QASASGSGTPKKTAASSAAAQNSKQLLDQLSQQQK. The segment at 18–128 is disordered; the sequence is QASASGSGTP…GSANTNGSAS (111 aa). Basic and acidic residues-rich tracts occupy residues 53–66 and 74–84; these read AQEEAETHSRRDCD and EPEKDLDELRD. Positions 87–99 are enriched in polar residues; the sequence is GSLTGSGSVGKSN. The span at 100–128 shows a compositional bias: low complexity; the sequence is GSLSGASSTTSAPAGTSTPGSANTNGSAS. Doublecortin domains lie at 157–243 and 314–397; these read HRIK…VDYN and RIVT…VDDF. Residues 484 to 742 enclose the Protein kinase domain; that stretch reads YTLSQIIGDG…SEDILDHYWT (259 aa). Residues 490–498 and Lys-513 each bind ATP; that span reads IGDGNFAIV. Asp-605 functions as the Proton acceptor in the catalytic mechanism.

The protein belongs to the protein kinase superfamily. CAMK Ser/Thr protein kinase family. CaMK subfamily.

The catalysed reaction is L-seryl-[protein] + ATP = O-phospho-L-seryl-[protein] + ADP + H(+). It carries out the reaction L-threonyl-[protein] + ATP = O-phospho-L-threonyl-[protein] + ADP + H(+). The polypeptide is Serine/threonine-protein kinase GL21140 (Drosophila persimilis (Fruit fly)).